The following is a 547-amino-acid chain: CDK5RAP1-like protein (547 aa).

In terms of domain architecture, MTTase N-terminal spans 79 to 194 (RTVCYVTYGC…LPRLVAVAAG (116 aa)). Positions 88, 124, 157, 232, 236, and 239 each coordinate [4Fe-4S] cluster. The Radical SAM core domain maps to 218-475 (DSASKTAFIS…TTVFREEALK (258 aa)). Residues 478–543 (QALIGSEQTV…SQTLKAQLIG (66 aa)) enclose the TRAM domain.

It belongs to the methylthiotransferase family. MiaB subfamily. [4Fe-4S] cluster is required as a cofactor.

In terms of biological role, potential regulator of CDK5 activity. This chain is CDK5RAP1-like protein, found in Caenorhabditis elegans.